Consider the following 184-residue polypeptide: NADH-quinone oxidoreductase subunit B (184 aa).

[4Fe-4S] cluster-binding residues include Cys63, Cys64, Cys128, and Cys158.

This sequence belongs to the complex I 20 kDa subunit family. NDH-1 is composed of 14 different subunits. Subunits NuoB, C, D, E, F, and G constitute the peripheral sector of the complex. The cofactor is [4Fe-4S] cluster.

It localises to the cell inner membrane. It catalyses the reaction a quinone + NADH + 5 H(+)(in) = a quinol + NAD(+) + 4 H(+)(out). Its function is as follows. NDH-1 shuttles electrons from NADH, via FMN and iron-sulfur (Fe-S) centers, to quinones in the respiratory chain. The immediate electron acceptor for the enzyme in this species is believed to be ubiquinone. Couples the redox reaction to proton translocation (for every two electrons transferred, four hydrogen ions are translocated across the cytoplasmic membrane), and thus conserves the redox energy in a proton gradient. The sequence is that of NADH-quinone oxidoreductase subunit B from Xanthomonas oryzae pv. oryzae (strain MAFF 311018).